The sequence spans 442 residues: Proline--tRNA ligase (442 aa).

This sequence belongs to the class-II aminoacyl-tRNA synthetase family. ProS type 2 subfamily. Homodimer.

It is found in the cytoplasm. The enzyme catalyses tRNA(Pro) + L-proline + ATP = L-prolyl-tRNA(Pro) + AMP + diphosphate. Functionally, catalyzes the attachment of proline to tRNA(Pro) in a two-step reaction: proline is first activated by ATP to form Pro-AMP and then transferred to the acceptor end of tRNA(Pro). In Mesorhizobium japonicum (strain LMG 29417 / CECT 9101 / MAFF 303099) (Mesorhizobium loti (strain MAFF 303099)), this protein is Proline--tRNA ligase.